Reading from the N-terminus, the 33-residue chain is Large ribosomal subunit protein eL21 (33 aa).

Belongs to the eukaryotic ribosomal protein eL21 family. In terms of assembly, component of the large ribosomal subunit.

Its subcellular location is the cytoplasm. The protein localises to the cytosol. It localises to the endoplasmic reticulum. Functionally, component of the large ribosomal subunit. The ribosome is a large ribonucleoprotein complex responsible for the synthesis of proteins in the cell. This Xenopus laevis (African clawed frog) protein is Large ribosomal subunit protein eL21 (rpl21).